Here is a 490-residue protein sequence, read N- to C-terminus: GTPase Der (490 aa).

EngA-type G domains are found at residues 3–166 (PVVA…MDDV) and 203–376 (IKLA…DSST). GTP-binding positions include 9–16 (GRPNVGKS), 56–60 (DTGGI), 118–121 (NKTD), 209–216 (GRPNVGKS), 256–260 (DTAGV), and 321–324 (NKWD). The 85-residue stretch at 377-461 (RRVSTAMLTR…PIRIQFKEGE (85 aa)) folds into the KH-like domain.

This sequence belongs to the TRAFAC class TrmE-Era-EngA-EngB-Septin-like GTPase superfamily. EngA (Der) GTPase family. In terms of assembly, associates with the 50S ribosomal subunit.

Its function is as follows. GTPase that plays an essential role in the late steps of ribosome biogenesis. In Salmonella typhi, this protein is GTPase Der.